We begin with the raw amino-acid sequence, 367 residues long: Putative 12-oxophytodienoate reductase 11 (367 aa).

FMN is bound by residues 26–28 (PLT), A59, and Q101. 178–181 (HGAH) lines the substrate pocket. Y183 serves as the catalytic Proton donor. An FMN-binding site is contributed by R230. R270 contacts substrate. FMN is bound by residues G300 and 321–322 (GR).

This sequence belongs to the NADH:flavin oxidoreductase/NADH oxidase family. FMN is required as a cofactor.

In terms of biological role, putative oxophytodienoate reductase that may be involved in the biosynthesis or metabolism of oxylipin signaling molecules. This Oryza sativa subsp. japonica (Rice) protein is Putative 12-oxophytodienoate reductase 11 (OPR11).